The chain runs to 708 residues: Kelch-like protein 11 (708 aa).

The first 15 residues, 1–15, serve as a signal peptide directing secretion; that stretch reads MAAAAVAAAAAAAAA. The segment at 47-70 is disordered; it reads DFGPGPGISAMEASGGDPGPEAED. In terms of domain architecture, BTB spans 94 to 170; it reads CDITLCFGGA…MYTGRIRVST (77 aa). Residues 205–307 form the BACK domain; sequence CVAIHSLAHM…KPTYLTRHVK (103 aa). Kelch repeat units lie at residues 360-407, 408-453, 455-501, 503-556, and 610-661; these read VIMV…VTES, YVYV…EVKG, LYSI…AIED, FVYI…VVNS, and DVFI…HVRI. S465 bears the Phosphoserine mark.

Component of a cullin-RING-based BCR (BTB-CUL3-RBX1) E3 ubiquitin-protein ligase complex. Homodimer. Interacts with CUL3.

Component of a cullin-RING-based BCR (BTB-CUL3-RBX1) E3 ubiquitin-protein ligase complex that mediates the ubiquitination of target proteins, leading most often to their proteasomal degradation. The polypeptide is Kelch-like protein 11 (KLHL11) (Homo sapiens (Human)).